The sequence spans 655 residues: RNA-binding protein EWS (655 aa).

The tract at residues 1 to 285 (MASTDYSTYS…GVYGQESGGF (285 aa)) is EAD (Gln/Pro/Thr-rich). Tandem repeats lie at residues 8–16 (TYSQAAAQQ), 17–27 (GYSAYTAQPTQ), 28–34 (GYAQTTQ), 35–42 (AYGQQSYG), 43–50 (TYGQPTDV), 51–59 (SYTQAQTTA), 60–68 (TYGQTAYAT), 69–75 (SYGQPPT), 76–84 (GYSTPTAPQ), 85–91 (AYSQPVQ), 92–110 (GYGTGTYDSTTATVTTTQA), 111–116 (SYAAQT), 117–125 (AYGTQPAYP), 126–156 (TYGQQPTATAPTRPQDGNKPAETSQPQSSTG), 157–163 (GYNQPSL), 164–170 (GYGQSNY), 171–177 (SYPQVPG), 178–188 (SYPMQPVTAPP), 189–193 (SYPPT), 194–201 (SYSSSQPT), 202–206 (SYDQS), 207–212 (SYSQQN), 213–218 (TYGQPS), 219–224 (SYGQQS), 225–230 (SYGQQS), 231–238 (SYGQQPPT), 239–245 (SYPPQTG), 246–252 (SYSQAPS), 253–259 (QYSQQSS), 260–276 (SYGQQSSFRQDHPSSMG), and 277–285 (VYGQESGGF). A 31 X approximate tandem repeats region spans residues 8–285 (TYSQAAAQQG…GVYGQESGGF (278 aa)). The segment at 121–350 (QPAYPTYGQQ…EGPDLDLGLP (230 aa)) is disordered. Polar residues-rich tracts occupy residues 127 to 137 (YGQQPTATAPT) and 146 to 172 (AETSQPQSSTGGYNQPSLGYGQSNYSY). Residues 192 to 266 (PTSYSSSQPT…QSSSYGQQSS (75 aa)) show a composition bias toward low complexity. The region spanning 256–285 (QQSSSYGQQSSFRQDHPSSMGVYGQESGGF) is the IQ domain. Position 266 is a phosphoserine; by PKC (Ser-266). Arg-300, Arg-302, Arg-304, Arg-309, Arg-314, Arg-317, and Arg-321 each carry asymmetric dimethylarginine. The span at 308–334 (DRGGMSRGGRGGGRGGLGAGERGGFNK) shows a compositional bias: gly residues. Low complexity predominate over residues 335-350 (PGGPMDEGPDLDLGLP). Residues 360 to 446 (SAIYVQGLND…SKLKVSLARK (87 aa)) enclose the RRM domain. Lys-438 bears the N6-acetyllysine mark. 2 disordered regions span residues 447–524 (KPPM…WQCP) and 544–655 (APKP…DRPY). Asymmetric dimethylarginine occurs at positions 454 and 463. An Asymmetric dimethylarginine; alternate modification is found at Arg-470. Arg-470 is subject to Omega-N-methylarginine; alternate. The segment covering 471 to 489 (GGPGGPGGPGGPMGRMGGR) has biased composition (gly residues). Arg-485 carries the omega-N-methylarginine modification. At Arg-489 the chain carries Asymmetric dimethylarginine; by PRMT8. 3 positions are modified to asymmetric dimethylarginine: Arg-493, Arg-499, and Arg-502. At Arg-505 the chain carries Asymmetric dimethylarginine; alternate. Position 505 is an omega-N-methylarginine; alternate (Arg-505). The RanBP2-type zinc-finger motif lies at 517–548 (RAGDWQCPNPGCGNQNFAWRTECNQCKAPKPE). A compositionally biased stretch (pro residues) spans 550 to 559 (FLPPPFPPPG). Asymmetric dimethylarginine is present on residues Arg-562 and Arg-564. Gly residues predominate over residues 565–590 (GGPGGMRGGRGGLMDRGGPGGMFRGG). Residue Arg-571 is modified to Asymmetric dimethylarginine; alternate; by PRMT8. Position 571 is an omega-N-methylarginine; alternate; by PRMT8 (Arg-571). Arg-574, Arg-580, Arg-588, and Arg-591 each carry asymmetric dimethylarginine. Residues 591–605 (RGGDRGGFRGGRGMD) are compositionally biased toward basic and acidic residues. Arg-595 carries the post-translational modification Asymmetric dimethylarginine; alternate; by PRMT8. Residue Arg-595 is modified to Omega-N-methylarginine; alternate; by PRMT8. The residue at position 599 (Arg-599) is an Asymmetric dimethylarginine. Arg-602 is subject to Asymmetric dimethylarginine; by PRMT8. Arg-606 carries the asymmetric dimethylarginine; alternate; by PRMT8 modification. Arg-606 is modified (omega-N-methylarginine; alternate; by PRMT8). Gly residues predominate over residues 606–617 (RGGFGGGRRGGP). Arg-614 is modified (asymmetric dimethylarginine; alternate). Arg-614 bears the Omega-N-methylarginine; alternate mark. 2 positions are modified to asymmetric dimethylarginine: Arg-632 and Arg-635. Positions 638-655 (PGKMDKGEHRQERRDRPY) match the Nuclear localization signal motif. The span at 640–655 (KMDKGEHRQERRDRPY) shows a compositional bias: basic and acidic residues.

It belongs to the RRM TET family. As to quaternary structure, binds RNA, POLR2C, SF1 and calmodulin. Interacts with PTK2B and TDRD3. Forms a complex with REC8, PRDM9, SYCP3 and SYCP1; complex formation is dependent of phosphorylated form of REC8 and requires PRDM9 bound to hotspot DNA; EWSR1 joins PRDM9 with the chromosomal axis through REC8. Phosphorylated; calmodulin-binding inhibits phosphorylation of Ser-266. Post-translationally, highly methylated on arginine residues. Methylation is mediated by PRMT1 and, at lower level by PRMT8.

Its subcellular location is the nucleus. It is found in the cytoplasm. The protein resides in the cell membrane. Binds to ssRNA containing the consensus sequence 5'-AGGUAA-3'. Might function as a transcriptional repressor. The chain is RNA-binding protein EWS (Ewsr1) from Mus musculus (Mouse).